A 101-amino-acid chain; its full sequence is Feather keratin Cos1-1/Cos1-3/Cos2-1 (101 aa).

An N-acetylserine modification is found at Ser-2.

Belongs to the avian keratin family. In terms of assembly, the avian keratins (F-ker, S-ker, C-ker and B-ker) are a complex mixture of very similar polypeptides.

The sequence is that of Feather keratin Cos1-1/Cos1-3/Cos2-1 from Columba livia (Rock dove).